Reading from the N-terminus, the 425-residue chain is Multifunctional CCA protein (425 aa).

Residues Gly8 and Arg11 each coordinate ATP. CTP contacts are provided by Gly8 and Arg11. Mg(2+)-binding residues include Asp21 and Asp23. Residues Arg91, Arg141, and Arg144 each coordinate ATP. Residues Arg91, Arg141, and Arg144 each contribute to the CTP site. Positions 230–331 (TGVHLMMVLD…VRLLERCDAI (102 aa)) constitute an HD domain.

The protein belongs to the tRNA nucleotidyltransferase/poly(A) polymerase family. Bacterial CCA-adding enzyme type 1 subfamily. In terms of assembly, monomer. Can also form homodimers and oligomers. Requires Mg(2+) as cofactor. The cofactor is Ni(2+).

The enzyme catalyses a tRNA precursor + 2 CTP + ATP = a tRNA with a 3' CCA end + 3 diphosphate. It catalyses the reaction a tRNA with a 3' CCA end + 2 CTP + ATP = a tRNA with a 3' CCACCA end + 3 diphosphate. Its function is as follows. Catalyzes the addition and repair of the essential 3'-terminal CCA sequence in tRNAs without using a nucleic acid template. Adds these three nucleotides in the order of C, C, and A to the tRNA nucleotide-73, using CTP and ATP as substrates and producing inorganic pyrophosphate. tRNA 3'-terminal CCA addition is required both for tRNA processing and repair. Also involved in tRNA surveillance by mediating tandem CCA addition to generate a CCACCA at the 3' terminus of unstable tRNAs. While stable tRNAs receive only 3'-terminal CCA, unstable tRNAs are marked with CCACCA and rapidly degraded. The chain is Multifunctional CCA protein from Acidovorax sp. (strain JS42).